Consider the following 86-residue polypeptide: Large ribosomal subunit protein bL27 (86 aa).

The disordered stretch occupies residues 1–24 (MATKKAGGSSRNGRDSAGRRLGVK).

This sequence belongs to the bacterial ribosomal protein bL27 family.

In Rickettsia conorii (strain ATCC VR-613 / Malish 7), this protein is Large ribosomal subunit protein bL27.